Reading from the N-terminus, the 294-residue chain is MNQTTIAKEVKGIGIGLHKGEPISIKLEPLEAGSGIVFYRSDLGISYEAKPENVIDTQMATVIGDHRGYVSTIEHLMSAINAYGIDNVRIVLDANEAPVMDGSSIGFCMMLEEAGIKELDVAKKILVIKKSVEVKEGNKFVRLSPTDMPIINYTIEFDNPIIGKQNYCFEFSKQNYIEQIARARTFGFLKDVQALRAMNLGLGGSLENAVVIDDNRILNPEGLRFKDEFVRHKILDAIGDLTLLGCRVFGDYTSYAGSHKLNHLLTKELLKDPSAYEVVSLEKSTYKVYEKVFA.

Zn(2+) is bound by residues H75, H232, and D236. The Proton donor role is filled by H259.

It belongs to the LpxC family. Zn(2+) serves as cofactor.

It carries out the reaction a UDP-3-O-[(3R)-3-hydroxyacyl]-N-acetyl-alpha-D-glucosamine + H2O = a UDP-3-O-[(3R)-3-hydroxyacyl]-alpha-D-glucosamine + acetate. The protein operates within glycolipid biosynthesis; lipid IV(A) biosynthesis; lipid IV(A) from (3R)-3-hydroxytetradecanoyl-[acyl-carrier-protein] and UDP-N-acetyl-alpha-D-glucosamine: step 2/6. Catalyzes the hydrolysis of UDP-3-O-myristoyl-N-acetylglucosamine to form UDP-3-O-myristoylglucosamine and acetate, the committed step in lipid A biosynthesis. The protein is UDP-3-O-acyl-N-acetylglucosamine deacetylase of Campylobacter lari (strain RM2100 / D67 / ATCC BAA-1060).